Reading from the N-terminus, the 161-residue chain is Regulator of ribonuclease activity A (161 aa).

It belongs to the RraA family. As to quaternary structure, homotrimer. Binds to both RNA-binding sites in the C-terminal region of Rne and to RhlB.

The protein localises to the cytoplasm. Its function is as follows. Globally modulates RNA abundance by binding to RNase E (Rne) and regulating its endonucleolytic activity. Can modulate Rne action in a substrate-dependent manner by altering the composition of the degradosome. Modulates RNA-binding and helicase activities of the degradosome. The protein is Regulator of ribonuclease activity A of Sodalis glossinidius (strain morsitans).